Reading from the N-terminus, the 120-residue chain is C-C motif chemokine 2 (120 aa).

The N-terminal stretch at 1–23 is a signal peptide; it reads MQRSSVLLCLLVIEATFCSLLMA. Gln24 carries the pyrrolidone carboxylic acid modification. Intrachain disulfides connect Cys33-Cys57 and Cys34-Cys73. The tract at residues 91–120 is disordered; it reads RTQQKQNSTAPQTSKPLNIRFTTQDPKNRS. Polar residues predominate over residues 93–120; it reads QQKQNSTAPQTSKPLNIRFTTQDPKNRS. The N-linked (GlcNAc...) asparagine glycan is linked to Asn97.

This sequence belongs to the intercrine beta (chemokine CC) family. As to quaternary structure, monomer or homodimer; in equilibrium. Is tethered on endothelial cells by glycosaminoglycan (GAG) side chains of proteoglycans. Interacts with TNFAIP6 (via Link domain). In terms of processing, processing at the N-terminus can regulate receptor and target cell selectivity. Deletion of the N-terminal residue converts it from an activator of basophil to an eosinophil chemoattractant. Post-translationally, N-Glycosylated.

Its subcellular location is the secreted. Functionally, acts as a ligand for C-C chemokine receptor CCR2. Signals through binding and activation of CCR2 and induces a strong chemotactic response and mobilization of intracellular calcium ions. Exhibits a chemotactic activity for monocytes and basophils but not neutrophils or eosinophils. Plays an important role in mediating peripheral nerve injury-induced neuropathic pain. Increases NMDA-mediated synaptic transmission in both dopamine D1 and D2 receptor-containing neurons, which may be caused by MAPK/ERK-dependent phosphorylation of GRIN2B/NMDAR2B. The sequence is that of C-C motif chemokine 2 (CCL2) from Cavia porcellus (Guinea pig).